The chain runs to 269 residues: Phosphatidylglycerol--prolipoprotein diacylglyceryl transferase (269 aa).

Helical transmembrane passes span 10–30 (VALA…LIGI), 56–76 (MVFW…VLFY), 92–112 (WKGG…AWWF), 120–140 (FFEL…AGRI), 174–194 (PSQL…LWLF), 202–222 (MAVS…VEFV), and 237–257 (LTMG…LIWL). Arg-139 serves as a coordination point for a 1,2-diacyl-sn-glycero-3-phospho-(1'-sn-glycerol).

The protein belongs to the Lgt family.

It is found in the cell inner membrane. The catalysed reaction is L-cysteinyl-[prolipoprotein] + a 1,2-diacyl-sn-glycero-3-phospho-(1'-sn-glycerol) = an S-1,2-diacyl-sn-glyceryl-L-cysteinyl-[prolipoprotein] + sn-glycerol 1-phosphate + H(+). Its pathway is protein modification; lipoprotein biosynthesis (diacylglyceryl transfer). Its function is as follows. Catalyzes the transfer of the diacylglyceryl group from phosphatidylglycerol to the sulfhydryl group of the N-terminal cysteine of a prolipoprotein, the first step in the formation of mature lipoproteins. This chain is Phosphatidylglycerol--prolipoprotein diacylglyceryl transferase, found in Pseudomonas fluorescens (strain ATCC BAA-477 / NRRL B-23932 / Pf-5).